The following is a 134-amino-acid chain: Transcription factor atoh7 (134 aa).

Positions 1 to 27 (MKPRRPSCADSGSDSDSRDPEKFESAM) are disordered. A compositionally biased stretch (basic and acidic residues) spans 15–27 (SDSRDPEKFESAM). A bHLH domain is found at 28-80 (RRRMAANARERKRMQGLNTAFDRLRKVVPQWGQDKKLSKYETLQMALSYIMAL).

It is found in the nucleus. It localises to the perikaryon. The protein resides in the cell projection. Its subcellular location is the axon. Transcription factor that binds to DNA at the consensus sequence 5'-CAG[GC]TG-3'. Involved in the differentiation of retinal ganglion cells, photoreceptor population and optic nerve development. Required for retinal circadian rhythm photoentrainment. This Danio rerio (Zebrafish) protein is Transcription factor atoh7.